The chain runs to 387 residues: S-adenosylmethionine synthase (387 aa).

His17 is a binding site for ATP. Asp19 provides a ligand contact to Mg(2+). Glu45 contacts K(+). Residues Glu58 and Gln101 each contribute to the L-methionine site. Residues 101-111 form a flexible loop region; the sequence is QSADIAMGVDA. ATP contacts are provided by residues 166–168, 231–232, Asp240, 246–247, Ala263, and Lys267; these read DAK, RF, and RK. Position 240 (Asp240) interacts with L-methionine. Lys271 is an L-methionine binding site.

Belongs to the AdoMet synthase family. Homotetramer; dimer of dimers. Requires Mg(2+) as cofactor. The cofactor is K(+).

Its subcellular location is the cytoplasm. It carries out the reaction L-methionine + ATP + H2O = S-adenosyl-L-methionine + phosphate + diphosphate. The protein operates within amino-acid biosynthesis; S-adenosyl-L-methionine biosynthesis; S-adenosyl-L-methionine from L-methionine: step 1/1. Catalyzes the formation of S-adenosylmethionine (AdoMet) from methionine and ATP. The overall synthetic reaction is composed of two sequential steps, AdoMet formation and the subsequent tripolyphosphate hydrolysis which occurs prior to release of AdoMet from the enzyme. This Rhodospirillum centenum (strain ATCC 51521 / SW) protein is S-adenosylmethionine synthase.